We begin with the raw amino-acid sequence, 622 residues long: 1-deoxy-D-xylulose-5-phosphate synthase (622 aa).

Residues His-71 and 112 to 114 (GHS) contribute to the thiamine diphosphate site. Residue Asp-143 coordinates Mg(2+). Thiamine diphosphate contacts are provided by residues 144 to 145 (GA), Asn-172, Tyr-283, and Glu-363. Position 172 (Asn-172) interacts with Mg(2+).

The protein belongs to the transketolase family. DXPS subfamily. As to quaternary structure, homodimer. Mg(2+) serves as cofactor. Requires thiamine diphosphate as cofactor.

The enzyme catalyses D-glyceraldehyde 3-phosphate + pyruvate + H(+) = 1-deoxy-D-xylulose 5-phosphate + CO2. The protein operates within metabolic intermediate biosynthesis; 1-deoxy-D-xylulose 5-phosphate biosynthesis; 1-deoxy-D-xylulose 5-phosphate from D-glyceraldehyde 3-phosphate and pyruvate: step 1/1. Functionally, catalyzes the acyloin condensation reaction between C atoms 2 and 3 of pyruvate and glyceraldehyde 3-phosphate to yield 1-deoxy-D-xylulose-5-phosphate (DXP). In Caldanaerobacter subterraneus subsp. tengcongensis (strain DSM 15242 / JCM 11007 / NBRC 100824 / MB4) (Thermoanaerobacter tengcongensis), this protein is 1-deoxy-D-xylulose-5-phosphate synthase.